Here is a 369-residue protein sequence, read N- to C-terminus: MSTGLRYKSKLATPEDKQDIDKQYVGFATLPNQVHRKSVKKGFDFTLMVAGESGLGKSTLVHSLFLTDLYKDRKLLSAEERINQTVEILKHTVDIEEKGVKLKLTIVDTPGFGDAVNNSECWKPITDYVDQQFEQYFRDESGLNRKNIQDNRVHCCLYFISPFGHGLRPVDVGFMKALHEKVNIVPLIAKADCLVPSEIRKLKDRIREEIDKFGIHVYQFPECDSDEDEDFKQQDRELKESAPFAVIGSNTVVEAKGQRVRGRLYPWGIVEVENQAHCDFVKLRNMLIRTHMHDLKDVTCDVHYENYRAHCIQQMTSKLTQDSRMESPIPILPLPTPDAETEKLIRMKDEELRRMQEMLQKMKQQMQDQ.

Threonine 13 carries the post-translational modification Phosphothreonine. A Septin-type G domain is found at 41-314 (KGFDFTLMVA…ENYRAHCIQQ (274 aa)). The interval 51-58 (GESGLGKS) is G1 motif. GTP-binding positions include 51-58 (GESGLGKS), threonine 85, and glycine 111. Residues 108–111 (DTPG) are G3 motif. Arginine 168 carries the omega-N-methylarginine modification. Positions 189-192 (AKAD) are G4 motif. GTP is bound at residue 190-198 (KADCLVPSE). Residue serine 225 is modified to Phosphoserine. Glycine 248 and arginine 263 together coordinate GTP. Position 327 is a phosphoserine (serine 327). Threonine 336 bears the Phosphothreonine mark. Residues 338-369 (DAETEKLIRMKDEELRRMQEMLQKMKQQMQDQ) adopt a coiled-coil conformation.

This sequence belongs to the TRAFAC class TrmE-Era-EngA-EngB-Septin-like GTPase superfamily. Septin GTPase family. As to quaternary structure, septins polymerize into heterooligomeric protein complexes that form filaments, and can associate with cellular membranes, actin filaments and microtubules. GTPase activity is required for filament formation. Interacts with SEPTIN2 and SEPTIN5. Interaction with SEPTIN4 not detected. In platelets, associated with a complex containing STX4. Interacts with PRKN; this interaction leads to SEPTIN5 ubiquitination and degradation. Interacts with DYRK1A. Interacts with STX1A; in the cerebellar cortex. Phosphorylated by DYRK1A.

It is found in the cytoplasm. Its subcellular location is the cytoskeleton. In terms of biological role, filament-forming cytoskeletal GTPase. Involved in cytokinesis (Potential). May play a role in platelet secretion. This chain is Septin-5, found in Mus musculus (Mouse).